Consider the following 161-residue polypeptide: Regulatory protein RecX (161 aa).

The protein belongs to the RecX family.

Its subcellular location is the cytoplasm. Functionally, modulates RecA activity. The protein is Regulatory protein RecX of Halorhodospira halophila (strain DSM 244 / SL1) (Ectothiorhodospira halophila (strain DSM 244 / SL1)).